Reading from the N-terminus, the 155-residue chain is Large ribosomal subunit protein uL13 (155 aa).

Belongs to the universal ribosomal protein uL13 family. Part of the 50S ribosomal subunit.

This protein is one of the early assembly proteins of the 50S ribosomal subunit, although it is not seen to bind rRNA by itself. It is important during the early stages of 50S assembly. The sequence is that of Large ribosomal subunit protein uL13 from Rickettsia bellii (strain OSU 85-389).